The primary structure comprises 486 residues: Cytochrome P450 monooxygenase 1 (486 aa).

Positions 1-21 (MSHFLPTLILTSLTLVAYVLA) are cleaved as a signal peptide. Asparagine 346 carries N-linked (GlcNAc...) asparagine glycosylation. Cysteine 430 is a heme binding site. Asparagine 434 is a glycosylation site (N-linked (GlcNAc...) asparagine).

It belongs to the cytochrome P450 family. It depends on heme as a cofactor.

Its pathway is mycotoxin biosynthesis. Cytochrome P450 monooxygenase; part of the gene cluster that mediates the biosynthesis of aphidicolin, a specific inhibitor of eukaryotic DNA synthesis and DNA polymerase alpha. The geranylgeranyl pyrophosphate synthase GGS is required for supplying a sufficient amount of geranylgeranyl diphosphate (GGDP), the general precursor of diterpenes. The diterpene synthase ACS then catalyzes the conversion of geranylgeranyl diphosphate to aphidicolan-16-beta-ol via the intermediate syn-copalyldiphosphate (syn-CDP). In addition to aphidicolan-16-beta-ol, the enzyme also produces low levels of amphidicol-15-ene and amphidicol-16-ene. The cytochrome P450 monooxygenase P450-2 then catalyzes the two-step hydroxylation from aphidicolan-16-beta-ol to 3-deoxyaphidicolin via a 17,3-deoxyaphidicolin intermediate. Finally, the cytochrome P450 monooxygenase P450-1 converts 3-deoxyaphidicolin to aphidicolin. The polypeptide is Cytochrome P450 monooxygenase 1 (PbP450-1) (Neocamarosporium betae (Beet black rot fungus)).